The sequence spans 83 residues: Small ribosomal subunit protein eS21 (83 aa).

It belongs to the eukaryotic ribosomal protein eS21 family. In terms of assembly, component of the 40S small ribosomal subunit.

The protein localises to the cytoplasm. It is found in the cytosol. The protein resides in the rough endoplasmic reticulum. The polypeptide is Small ribosomal subunit protein eS21 (RpS21) (Agriotes lineatus (Lined click beetle)).